Consider the following 415-residue polypeptide: Probable G-protein coupled receptor 19 (415 aa).

Topologically, residues 1-69 (MVFAHRMDND…LNPGEVATAS (69 aa)) are extracellular. Asparagine 25 and asparagine 52 each carry an N-linked (GlcNAc...) asparagine glycan. The helical transmembrane segment at 70-90 (IFFGALWLFSIFGNSLVCLVI) threads the bilayer. At 91 to 102 (HRSRRTQSTTNY) the chain is on the cytoplasmic side. A helical transmembrane segment spans residues 103–123 (FVVSMACADLLISVASTPFVV). Residues 124–152 (LQFTTGRWTLGSAMCKVVRYFQYLTPGVQ) lie on the Extracellular side of the membrane. Cysteine 138 and cysteine 210 are oxidised to a cystine. The helical transmembrane segment at 153–173 (IYVLLSICIDRFYTIVYPLSF) threads the bilayer. Over 174-182 (KVSREKAKK) the chain is Cytoplasmic. Residues 183–203 (MIAASWILDAAFVTPVFFFYG) traverse the membrane as a helical segment. The Extracellular portion of the chain corresponds to 204–221 (SNWDSHCNYFLPPSWEGT). The helical transmembrane segment at 222–242 (AYTVIHFLVGFVIPSILIILF) threads the bilayer. Residues 243–277 (YQKVIKYIWRIGTDGRTLRRTMNIVPRTKVKTVKM) lie on the Cytoplasmic side of the membrane. The chain crosses the membrane as a helical span at residues 278–298 (FLLLNLVFLFSWLPFHVAQLW). Topologically, residues 299-309 (HPHEQDYKKSS) are extracellular. The chain crosses the membrane as a helical span at residues 310 to 332 (LVFTAVTWVSFSSSASKPTLYSI). At 333 to 415 (YNANFRRGMK…INSNPPNTFV (83 aa)) the chain is on the cytoplasmic side.

It belongs to the G-protein coupled receptor 1 family. As to expression, strongly expressed in the brain.

The protein resides in the cell membrane. Functionally, G-protein coupled receptor that plays a role in the regulation of circadian rhythms and energy metabolism. Participates in maintaining proper circadian gene expression in the suprachiasmatic nucleus (SCN), the locus of the master circadian clock in the brain. May function as a coordinator of aging-associated metabolic dysfunction, stress response, DNA integrity management, and eventual senescence. Upon binding to adropin, modulates mitochondrial energy metabolism via the p44/42-PDK4 signaling pathway, influencing pyruvate dehydrogenase activity. This chain is Probable G-protein coupled receptor 19 (Gpr19), found in Mus musculus (Mouse).